The sequence spans 437 residues: Glycogen synthase (437 aa).

Lys15 serves as a coordination point for ADP-alpha-D-glucose.

This sequence belongs to the glycosyltransferase 1 family. Bacterial/plant glycogen synthase subfamily.

The catalysed reaction is [(1-&gt;4)-alpha-D-glucosyl](n) + ADP-alpha-D-glucose = [(1-&gt;4)-alpha-D-glucosyl](n+1) + ADP + H(+). It functions in the pathway glycan biosynthesis; glycogen biosynthesis. Synthesizes alpha-1,4-glucan chains using ADP-glucose. In Thermus thermophilus (strain ATCC BAA-163 / DSM 7039 / HB27), this protein is Glycogen synthase.